Consider the following 114-residue polypeptide: Nucleoid-associated protein MAB_0319 (114 aa).

Belongs to the YbaB/EbfC family. In terms of assembly, homodimer.

It localises to the cytoplasm. It is found in the nucleoid. Functionally, binds to DNA and alters its conformation. May be involved in regulation of gene expression, nucleoid organization and DNA protection. In Mycobacteroides abscessus (strain ATCC 19977 / DSM 44196 / CCUG 20993 / CIP 104536 / JCM 13569 / NCTC 13031 / TMC 1543 / L948) (Mycobacterium abscessus), this protein is Nucleoid-associated protein MAB_0319.